Consider the following 340-residue polypeptide: Methane monooxygenase component C (340 aa).

Residues 1–92 enclose the 2Fe-2S ferredoxin-type domain; that stretch reads MYQIVIETED…DLHLLVPYTY (92 aa). 4 residues coordinate [2Fe-2S] cluster: Cys37, Cys41, Cys44, and Cys76. Residues 101-205 form the FAD-binding FR-type domain; that stretch reads QTNWLAEILA…RGPAGSFFLH (105 aa). 215–229 lines the FAD pocket; that stretch reads VAGGTGLSPVLSMIR.

As to quaternary structure, the soluble methane monooxygenase (sMMO) consists of four components A/MMOH (composed of alpha/MmoX, beta/MmoY and gamma/MmoZ), B/MMOB (MmoB), C/MMOR (MmoC) and D/MMOD (MmoD). The cofactor is [2Fe-2S] cluster.

It carries out the reaction methane + NADH + O2 + H(+) = methanol + NAD(+) + H2O. The enzyme catalyses methane + NADPH + O2 + H(+) = methanol + NADP(+) + H2O. Responsible for the initial oxygenation of methane to methanol in methanotrophs. It also catalyzes the monohydroxylation of a variety of unactivated alkenes, alicyclic, aromatic and heterocyclic compounds. The component C is the iron-sulfur flavoprotein of sMMO. In Methylosinus trichosporium, this protein is Methane monooxygenase component C (mmoC).